We begin with the raw amino-acid sequence, 856 residues long: Valine--tRNA ligase (856 aa).

Positions 47-57 (PTASGVLHIGH) match the 'HIGH' region motif. A 'KMSKS' region motif is present at residues 578–582 (KMSKS). K581 serves as a coordination point for ATP.

This sequence belongs to the class-I aminoacyl-tRNA synthetase family. ValS type 2 subfamily. Monomer.

It is found in the cytoplasm. It carries out the reaction tRNA(Val) + L-valine + ATP = L-valyl-tRNA(Val) + AMP + diphosphate. Catalyzes the attachment of valine to tRNA(Val). As ValRS can inadvertently accommodate and process structurally similar amino acids such as threonine, to avoid such errors, it has a 'posttransfer' editing activity that hydrolyzes mischarged Thr-tRNA(Val) in a tRNA-dependent manner. The chain is Valine--tRNA ligase from Tropheryma whipplei (strain Twist) (Whipple's bacillus).